We begin with the raw amino-acid sequence, 1023 residues long: Probable histidine kinase 3 (1023 aa).

The Cytoplasmic portion of the chain corresponds to 1–80 (MDEMSCGGGG…RGWRVVRETW (80 aa)). Residues 81-101 (WWVLLLWILAGSLGSFYLFLF) form a helical membrane-spanning segment. Residues 102–387 (MNAQSLDKRR…CRFEKKPPWP (286 aa)) lie on the Extracellular side of the membrane. Positions 151–352 (TPSAIDQMTF…TNESPISMYG (202 aa)) constitute a CHASE domain. The chain crosses the membrane as a helical span at residues 388 to 408 (WLAITSSFGTLVIALLTGHIF). Residues 409–1023 (QATVHRIAKV…RFFQNHDQVE (615 aa)) lie on the Cytoplasmic side of the membrane. A Histidine kinase domain is found at 445–715 (TVSHEIRTPM…TFTFTAVLMR (271 aa)). At His448 the chain carries Phosphohistidine; by autocatalysis. Response regulatory domains follow at residues 732–854 (NALV…RRAL) and 880–1016 (QIIV…ARFF). Residue Asp783 is modified to 4-aspartylphosphate. The disordered stretch occupies residues 812 to 831 (LFLLGSSASSPKGGSDTSRE). The span at 817-827 (SSASSPKGGSD) shows a compositional bias: polar residues. Asp930 carries the post-translational modification 4-aspartylphosphate.

Post-translationally, activation probably requires a transfer of a phosphate group between a His in the transmitter domain and an Asp of the receiver domain.

It localises to the cell membrane. The catalysed reaction is ATP + protein L-histidine = ADP + protein N-phospho-L-histidine.. In terms of biological role, cytokinin receptor related to bacterial two-component regulators. Functions as a histidine kinase and transmits the stress signal to a downstream MAPK cascade. In Oryza sativa subsp. indica (Rice), this protein is Probable histidine kinase 3.